A 311-amino-acid polypeptide reads, in one-letter code: 4-diphosphocytidyl-2-C-methyl-D-erythritol kinase (311 aa).

Lys-16 is an active-site residue. Position 100-110 (100-110 (PIGAGLAGGSS)) interacts with ATP. The active site involves Asp-142.

Belongs to the GHMP kinase family. IspE subfamily.

The catalysed reaction is 4-CDP-2-C-methyl-D-erythritol + ATP = 4-CDP-2-C-methyl-D-erythritol 2-phosphate + ADP + H(+). Its pathway is isoprenoid biosynthesis; isopentenyl diphosphate biosynthesis via DXP pathway; isopentenyl diphosphate from 1-deoxy-D-xylulose 5-phosphate: step 3/6. In terms of biological role, catalyzes the phosphorylation of the position 2 hydroxy group of 4-diphosphocytidyl-2C-methyl-D-erythritol. The chain is 4-diphosphocytidyl-2-C-methyl-D-erythritol kinase from Prochlorococcus marinus (strain MIT 9215).